Here is a 228-residue protein sequence, read N- to C-terminus: Ephrin-A5 (228 aa).

Residues 1 to 20 (MPHVEMLLLAVAALWVCVRG) form the signal peptide. Positions 29–162 (ADRYAVYWNS…KLKVFVRPAN (134 aa)) constitute an Ephrin RBD domain. N-linked (GlcNAc...) asparagine glycosylation is present at Asn-37. 2 cysteine pairs are disulfide-bonded: Cys-62/Cys-102 and Cys-90/Cys-151. Asn-203 carries the GPI-anchor amidated asparagine lipid modification. Positions 204–228 (AAQTPRIPIRLLATLLFLLAMLLIL) are cleaved as a propeptide — removed in mature form.

Belongs to the ephrin family. Expressed in a graded fashion across the tectum being more strongly expressed towards the posterior pole.

Its subcellular location is the cell membrane. Its function is as follows. Cell surface GPI-bound ligand for Eph receptors, a family of receptor tyrosine kinases which are crucial for migration, repulsion and adhesion during neuronal, vascular and epithelial development. Binds promiscuously Eph receptors residing on adjacent cells, leading to contact-dependent bidirectional signaling into neighboring cells. Induces compartmentalized signaling within a caveolae-like membrane microdomain when bound to the extracellular domain of its cognate receptor. This signaling event requires the activity of the Fyn tyrosine kinase. Activates the EPHA3 receptor to regulate cell-cell adhesion and cytoskeletal organization. With the receptor EPHA2 may regulate lens fiber cells shape and interactions and be important for lens transparency maintenance. May function actively to stimulate axon fasciculation. Induces growth cone collapse and repulsion of retinal ganglion cell axons. The chain is Ephrin-A5 (EFNA5) from Gallus gallus (Chicken).